The following is a 638-amino-acid chain: 1-deoxy-D-xylulose-5-phosphate synthase (638 aa).

Residues His-71 and 112-114 (SHA) contribute to the thiamine diphosphate site. Position 144 (Asp-144) interacts with Mg(2+). Thiamine diphosphate contacts are provided by residues 145 to 146 (GA), Asn-173, Tyr-284, and Glu-365. Asn-173 provides a ligand contact to Mg(2+).

The protein belongs to the transketolase family. DXPS subfamily. As to quaternary structure, homodimer. The cofactor is Mg(2+). Thiamine diphosphate is required as a cofactor.

The catalysed reaction is D-glyceraldehyde 3-phosphate + pyruvate + H(+) = 1-deoxy-D-xylulose 5-phosphate + CO2. The protein operates within metabolic intermediate biosynthesis; 1-deoxy-D-xylulose 5-phosphate biosynthesis; 1-deoxy-D-xylulose 5-phosphate from D-glyceraldehyde 3-phosphate and pyruvate: step 1/1. In terms of biological role, catalyzes the acyloin condensation reaction between C atoms 2 and 3 of pyruvate and glyceraldehyde 3-phosphate to yield 1-deoxy-D-xylulose-5-phosphate (DXP). This chain is 1-deoxy-D-xylulose-5-phosphate synthase, found in Mycobacterium bovis (strain ATCC BAA-935 / AF2122/97).